Consider the following 271-residue polypeptide: Probable short-chain type dehydrogenase/reductase VdlC (271 aa).

1–25 serves as a coordination point for NAD(+); sequence MAVITGASSGIGLECVLMLLNQGYK. Ser129 contributes to the substrate binding site. Tyr142 acts as the Proton acceptor in catalysis.

This sequence belongs to the short-chain dehydrogenases/reductases (SDR) family.

The chain is Probable short-chain type dehydrogenase/reductase VdlC (vdlC) from Helicobacter pylori (strain J99 / ATCC 700824) (Campylobacter pylori J99).